The primary structure comprises 249 residues: Coproheme decarboxylase (249 aa).

Fe-coproporphyrin III is bound by residues arginine 131, 145-149 (YPMDK), histidine 172, and glutamine 185. The active site involves tyrosine 145.

Belongs to the ChdC family. Type 1 subfamily. Fe-coproporphyrin III is required as a cofactor.

It carries out the reaction Fe-coproporphyrin III + 2 H2O2 + 2 H(+) = heme b + 2 CO2 + 4 H2O. It catalyses the reaction Fe-coproporphyrin III + H2O2 + H(+) = harderoheme III + CO2 + 2 H2O. The catalysed reaction is harderoheme III + H2O2 + H(+) = heme b + CO2 + 2 H2O. It participates in porphyrin-containing compound metabolism; protoheme biosynthesis. Involved in coproporphyrin-dependent heme b biosynthesis. Catalyzes the decarboxylation of Fe-coproporphyrin III (coproheme) to heme b (protoheme IX), the last step of the pathway. The reaction occurs in a stepwise manner with a three-propionate intermediate. This chain is Coproheme decarboxylase, found in Staphylococcus epidermidis (strain ATCC 35984 / DSM 28319 / BCRC 17069 / CCUG 31568 / BM 3577 / RP62A).